The primary structure comprises 349 residues: Anthranilate phosphoribosyltransferase (349 aa).

Residues glycine 81, 84–85 (GD), threonine 89, 91–94 (NVST), 109–117 (KHGNRAASS), and alanine 121 each bind 5-phospho-alpha-D-ribose 1-diphosphate. An anthranilate-binding site is contributed by glycine 81. Serine 93 is a binding site for Mg(2+). Position 112 (asparagine 112) interacts with anthranilate. Arginine 167 is a binding site for anthranilate. Mg(2+)-binding residues include aspartate 226 and glutamate 227.

This sequence belongs to the anthranilate phosphoribosyltransferase family. In terms of assembly, homodimer. Requires Mg(2+) as cofactor.

It carries out the reaction N-(5-phospho-beta-D-ribosyl)anthranilate + diphosphate = 5-phospho-alpha-D-ribose 1-diphosphate + anthranilate. The protein operates within amino-acid biosynthesis; L-tryptophan biosynthesis; L-tryptophan from chorismate: step 2/5. Catalyzes the transfer of the phosphoribosyl group of 5-phosphorylribose-1-pyrophosphate (PRPP) to anthranilate to yield N-(5'-phosphoribosyl)-anthranilate (PRA). In Methylocella silvestris (strain DSM 15510 / CIP 108128 / LMG 27833 / NCIMB 13906 / BL2), this protein is Anthranilate phosphoribosyltransferase.